We begin with the raw amino-acid sequence, 74 residues long: Homeobox protein H40 (74 aa).

The homeobox DNA-binding region spans 8-67 (ARRARTAFTYEQLVALENKFKTTRYLSVCERLNLALSLSLTETQVKIWFQNRRTKWKKQN).

The protein resides in the nucleus. This is Homeobox protein H40 from Apis mellifera (Honeybee).